Reading from the N-terminus, the 136-residue chain is Protein BUNDLE SHEATH DEFECTIVE 2, chloroplastic (136 aa).

Residues 1-56 (MANSLCFFSSPPTFCFQSPSKNPKPSHFFSTNDNTSSLVQKRELLQTSRSQSFEVK) constitute a chloroplast transit peptide. Residues 62–133 (PQGTKPNSLV…AGFIGGFLST (72 aa)) form a CR-type zinc finger. Zn(2+)-binding residues include C72, C75, E78, C80, C83, C86, C107, C110, E115, C118, and C121.

It belongs to the BSD2 chaperone family. In terms of assembly, interacts with the RuBisCo large subunit (RbcL) assembled as an intermediate complex made of eight RbcL and eight BSD2 subunits.

It localises to the plastid. The protein resides in the chloroplast stroma. Chloroplast chaperone required for RuBisCo biogenesis and translational regulation of the RuBisCo large subunit (RbcL). Stabilizes an end-state assembly intermediate of eight RbcL subunits until the small subunits (RBCSs) become available to produce a complete stable RuBisCo complex containing eight small and eight large subunits. The chain is Protein BUNDLE SHEATH DEFECTIVE 2, chloroplastic from Arabidopsis thaliana (Mouse-ear cress).